Consider the following 415-residue polypeptide: Serine hydroxymethyltransferase (415 aa).

(6S)-5,6,7,8-tetrahydrofolate is bound by residues Leu-120 and 124-126 (GHL). Position 229 is an N6-(pyridoxal phosphate)lysine (Lys-229).

This sequence belongs to the SHMT family. As to quaternary structure, homodimer. Pyridoxal 5'-phosphate serves as cofactor.

It is found in the cytoplasm. It catalyses the reaction (6R)-5,10-methylene-5,6,7,8-tetrahydrofolate + glycine + H2O = (6S)-5,6,7,8-tetrahydrofolate + L-serine. Its pathway is one-carbon metabolism; tetrahydrofolate interconversion. It participates in amino-acid biosynthesis; glycine biosynthesis; glycine from L-serine: step 1/1. Functionally, catalyzes the reversible interconversion of serine and glycine with tetrahydrofolate (THF) serving as the one-carbon carrier. This reaction serves as the major source of one-carbon groups required for the biosynthesis of purines, thymidylate, methionine, and other important biomolecules. Also exhibits THF-independent aldolase activity toward beta-hydroxyamino acids, producing glycine and aldehydes, via a retro-aldol mechanism. This is Serine hydroxymethyltransferase from Caldicellulosiruptor bescii (strain ATCC BAA-1888 / DSM 6725 / KCTC 15123 / Z-1320) (Anaerocellum thermophilum).